We begin with the raw amino-acid sequence, 222 residues long: Ribulose-phosphate 3-epimerase (222 aa).

Serine 7 lines the substrate pocket. A divalent metal cation-binding residues include histidine 32, aspartate 34, and histidine 65. Aspartate 34 serves as the catalytic Proton acceptor. Substrate-binding positions include histidine 65, 141–144, 174–176, and 196–197; these read GFSG, DGG, and GS. A divalent metal cation is bound at residue aspartate 174. Catalysis depends on aspartate 174, which acts as the Proton donor.

Belongs to the ribulose-phosphate 3-epimerase family. A divalent metal cation is required as a cofactor.

The enzyme catalyses D-ribulose 5-phosphate = D-xylulose 5-phosphate. Its pathway is carbohydrate degradation. In terms of biological role, catalyzes the reversible epimerization of D-ribulose 5-phosphate to D-xylulose 5-phosphate. The protein is Ribulose-phosphate 3-epimerase of Aquifex aeolicus (strain VF5).